The following is a 219-amino-acid chain: Orotate phosphoribosyltransferase (219 aa).

Residue lysine 26 coordinates 5-phospho-alpha-D-ribose 1-diphosphate. 34-35 is a binding site for orotate; it reads FF. 5-phospho-alpha-D-ribose 1-diphosphate is bound by residues 72–73, arginine 102, lysine 103, lysine 106, histidine 108, and 128–136; these read YK and DDVITAGTA. Residues threonine 132 and arginine 160 each contribute to the orotate site.

The protein belongs to the purine/pyrimidine phosphoribosyltransferase family. PyrE subfamily. As to quaternary structure, homodimer.

It catalyses the reaction orotidine 5'-phosphate + diphosphate = orotate + 5-phospho-alpha-D-ribose 1-diphosphate. The protein operates within pyrimidine metabolism; UMP biosynthesis via de novo pathway; UMP from orotate: step 1/2. In terms of biological role, catalyzes the transfer of a ribosyl phosphate group from 5-phosphoribose 1-diphosphate to orotate, leading to the formation of orotidine monophosphate (OMP). This chain is Orotate phosphoribosyltransferase (URA5), found in Yarrowia lipolytica (strain CLIB 122 / E 150) (Yeast).